Reading from the N-terminus, the 370-residue chain is Homospermidine synthase (370 aa).

It belongs to the deoxyhypusine synthase family. Homotetramer. Requires NAD(+) as cofactor.

It catalyses the reaction putrescine + spermidine = sym-homospermidine + propane-1,3-diamine. It functions in the pathway alkaloid biosynthesis; pyrrolizidine alkaloid biosynthesis. Catalyzes the transfer of an aminobutyl unit from spermidine onto putrescine. The resulting polyamine homospermidine is a precursor in the biosynthesis of pyrrolizidine alkaloids. This is Homospermidine synthase (HSS1) from Senecio vulgaris (Common groundsel).